The sequence spans 363 residues: Carbamoyl phosphate synthase small chain (363 aa).

The tract at residues 1-172 (MTKRILMLED…AFASPGDGKR (172 aa)) is CPSase. 3 residues coordinate L-glutamine: Ser-46, Gly-220, and Gly-222. Positions 172–359 (RVVLVDYGVK…MEMMNGKEEG (188 aa)) constitute a Glutamine amidotransferase type-1 domain. The Nucleophile role is filled by Cys-247. Positions 248, 251, 289, 291, and 292 each coordinate L-glutamine. Catalysis depends on residues His-332 and Glu-334.

The protein belongs to the CarA family. As to quaternary structure, composed of two chains; the small (or glutamine) chain promotes the hydrolysis of glutamine to ammonia, which is used by the large (or ammonia) chain to synthesize carbamoyl phosphate. Tetramer of heterodimers (alpha,beta)4.

It catalyses the reaction hydrogencarbonate + L-glutamine + 2 ATP + H2O = carbamoyl phosphate + L-glutamate + 2 ADP + phosphate + 2 H(+). It carries out the reaction L-glutamine + H2O = L-glutamate + NH4(+). The protein operates within amino-acid biosynthesis; L-arginine biosynthesis; carbamoyl phosphate from bicarbonate: step 1/1. It participates in pyrimidine metabolism; UMP biosynthesis via de novo pathway; (S)-dihydroorotate from bicarbonate: step 1/3. Its function is as follows. Small subunit of the glutamine-dependent carbamoyl phosphate synthetase (CPSase). CPSase catalyzes the formation of carbamoyl phosphate from the ammonia moiety of glutamine, carbonate, and phosphate donated by ATP, constituting the first step of 2 biosynthetic pathways, one leading to arginine and/or urea and the other to pyrimidine nucleotides. The small subunit (glutamine amidotransferase) binds and cleaves glutamine to supply the large subunit with the substrate ammonia. The protein is Carbamoyl phosphate synthase small chain of Listeria monocytogenes serotype 4b (strain F2365).